A 155-amino-acid chain; its full sequence is 6,7-dimethyl-8-ribityllumazine synthase (155 aa).

Residues phenylalanine 23, alanine 57–glutamate 59, and alanine 81–isoleucine 83 each bind 5-amino-6-(D-ribitylamino)uracil. A (2S)-2-hydroxy-3-oxobutyl phosphate-binding site is contributed by serine 86–threonine 87. Histidine 89 functions as the Proton donor in the catalytic mechanism. Position 114 (phenylalanine 114) interacts with 5-amino-6-(D-ribitylamino)uracil. Arginine 128 is a binding site for (2S)-2-hydroxy-3-oxobutyl phosphate.

This sequence belongs to the DMRL synthase family.

It catalyses the reaction (2S)-2-hydroxy-3-oxobutyl phosphate + 5-amino-6-(D-ribitylamino)uracil = 6,7-dimethyl-8-(1-D-ribityl)lumazine + phosphate + 2 H2O + H(+). It participates in cofactor biosynthesis; riboflavin biosynthesis; riboflavin from 2-hydroxy-3-oxobutyl phosphate and 5-amino-6-(D-ribitylamino)uracil: step 1/2. Its function is as follows. Catalyzes the formation of 6,7-dimethyl-8-ribityllumazine by condensation of 5-amino-6-(D-ribitylamino)uracil with 3,4-dihydroxy-2-butanone 4-phosphate. This is the penultimate step in the biosynthesis of riboflavin. This chain is 6,7-dimethyl-8-ribityllumazine synthase, found in Citrifermentans bemidjiense (strain ATCC BAA-1014 / DSM 16622 / JCM 12645 / Bem) (Geobacter bemidjiensis).